A 600-amino-acid chain; its full sequence is Proline--tRNA ligase (600 aa).

The protein belongs to the class-II aminoacyl-tRNA synthetase family. ProS type 1 subfamily. Homodimer.

It is found in the cytoplasm. It carries out the reaction tRNA(Pro) + L-proline + ATP = L-prolyl-tRNA(Pro) + AMP + diphosphate. Its function is as follows. Catalyzes the attachment of proline to tRNA(Pro) in a two-step reaction: proline is first activated by ATP to form Pro-AMP and then transferred to the acceptor end of tRNA(Pro). As ProRS can inadvertently accommodate and process non-cognate amino acids such as alanine and cysteine, to avoid such errors it has two additional distinct editing activities against alanine. One activity is designated as 'pretransfer' editing and involves the tRNA(Pro)-independent hydrolysis of activated Ala-AMP. The other activity is designated 'posttransfer' editing and involves deacylation of mischarged Ala-tRNA(Pro). The misacylated Cys-tRNA(Pro) is not edited by ProRS. The polypeptide is Proline--tRNA ligase (Synechococcus elongatus (strain ATCC 33912 / PCC 7942 / FACHB-805) (Anacystis nidulans R2)).